The sequence spans 354 residues: Holliday junction branch migration complex subunit RuvB (354 aa).

The large ATPase domain (RuvB-L) stretch occupies residues 4–198 (TTDYGASNTG…FGFTAHLDFY (195 aa)). ATP-binding positions include L37, R38, G79, K82, T83, T84, 145-147 (EDF), R188, Y198, and R235. T83 is a binding site for Mg(2+). Positions 199 to 269 (PHEELEKLIE…DVKEALALYQ (71 aa)) are small ATPAse domain (RuvB-S). Residues 272–354 (SEGLDRLDIA…TPKDDVSKLF (83 aa)) are head domain (RuvB-H). 2 residues coordinate DNA: R327 and R332.

It belongs to the RuvB family. As to quaternary structure, homohexamer. Forms an RuvA(8)-RuvB(12)-Holliday junction (HJ) complex. HJ DNA is sandwiched between 2 RuvA tetramers; dsDNA enters through RuvA and exits via RuvB. An RuvB hexamer assembles on each DNA strand where it exits the tetramer. Each RuvB hexamer is contacted by two RuvA subunits (via domain III) on 2 adjacent RuvB subunits; this complex drives branch migration. In the full resolvosome a probable DNA-RuvA(4)-RuvB(12)-RuvC(2) complex forms which resolves the HJ.

The protein resides in the cytoplasm. It catalyses the reaction ATP + H2O = ADP + phosphate + H(+). The RuvA-RuvB-RuvC complex processes Holliday junction (HJ) DNA during genetic recombination and DNA repair, while the RuvA-RuvB complex plays an important role in the rescue of blocked DNA replication forks via replication fork reversal (RFR). RuvA specifically binds to HJ cruciform DNA, conferring on it an open structure. The RuvB hexamer acts as an ATP-dependent pump, pulling dsDNA into and through the RuvAB complex. RuvB forms 2 homohexamers on either side of HJ DNA bound by 1 or 2 RuvA tetramers; 4 subunits per hexamer contact DNA at a time. Coordinated motions by a converter formed by DNA-disengaged RuvB subunits stimulates ATP hydrolysis and nucleotide exchange. Immobilization of the converter enables RuvB to convert the ATP-contained energy into a lever motion, pulling 2 nucleotides of DNA out of the RuvA tetramer per ATP hydrolyzed, thus driving DNA branch migration. The RuvB motors rotate together with the DNA substrate, which together with the progressing nucleotide cycle form the mechanistic basis for DNA recombination by continuous HJ branch migration. Branch migration allows RuvC to scan DNA until it finds its consensus sequence, where it cleaves and resolves cruciform DNA. This Bifidobacterium longum (strain NCC 2705) protein is Holliday junction branch migration complex subunit RuvB.